The following is a 557-amino-acid chain: Formate--tetrahydrofolate ligase (557 aa).

44-51 (TPLGEGKS) serves as a coordination point for ATP.

This sequence belongs to the formate--tetrahydrofolate ligase family.

The catalysed reaction is (6S)-5,6,7,8-tetrahydrofolate + formate + ATP = (6R)-10-formyltetrahydrofolate + ADP + phosphate. The protein operates within one-carbon metabolism; tetrahydrofolate interconversion. In Desulfotalea psychrophila (strain LSv54 / DSM 12343), this protein is Formate--tetrahydrofolate ligase.